The following is a 147-amino-acid chain: Phospholipase A2 inhibitor subunit A (147 aa).

The C-type lectin domain maps to 62–143; sequence EICEEAGGHI…DENLLVVCEF (82 aa). Disulfide bonds link C64-C141 and C119-C133. N-linked (GlcNAc...) asparagine glycosylation is present at N103.

Belongs to the alpha-type phospholipase A2 inhibitor family. As to quaternary structure, homo- or heterotrimer; homotrimer of PLI-A chains, two PLI-A and one PLI-B chains, one PLI-A and two PLI-B chains, and homotrimer of PLI-B chains (with a ratio of 1:3:3:1). As to expression, expressed by the liver.

The protein localises to the secreted. PLI binds directly phospholipase A2 in the presence or absence of calcium. Inhibitory activity of the PLI-A homotrimer is more specific than that of the PLI-B homotrimer. This Protobothrops flavoviridis (Habu) protein is Phospholipase A2 inhibitor subunit A.